A 261-amino-acid chain; its full sequence is DNA repair protein RecO (261 aa).

Belongs to the RecO family.

Functionally, involved in DNA repair and RecF pathway recombination. This is DNA repair protein RecO from Chlorobium phaeobacteroides (strain DSM 266 / SMG 266 / 2430).